We begin with the raw amino-acid sequence, 90 residues long: HssA/B-like protein 4 (90 aa).

The protein belongs to the hssA/B family.

This Dictyostelium discoideum (Social amoeba) protein is HssA/B-like protein 4 (hssl4).